The sequence spans 370 residues: Fe(2+) transport protein 2 (370 aa).

The N-terminal stretch at methionine 1 to alanine 25 is a signal peptide. At histidine 26–lysine 55 the chain is on the extracellular side. Residues leucine 56–alanine 76 form a helical membrane-spanning segment. Over arginine 77–aspartate 85 the chain is Cytoplasmic. The chain crosses the membrane as a helical span at residues glycine 86 to methionine 106. Over histidine 107–proline 130 the chain is Extracellular. The chain crosses the membrane as a helical span at residues phenylalanine 131–leucine 151. Topologically, residues threonine 152–arginine 215 are cytoplasmic. The helical transmembrane segment at valine 216–methionine 236 threads the bilayer. The Extracellular portion of the chain corresponds to glycine 237–proline 247. A helical membrane pass occupies residues leucine 248–leucine 268. Residues glutamine 269–serine 278 lie on the Cytoplasmic side of the membrane. A helical transmembrane segment spans residues alanine 279–threonine 299. At arginine 300 to alanine 309 the chain is on the extracellular side. A helical transmembrane segment spans residues leucine 310–valine 330. The Cytoplasmic portion of the chain corresponds to glutamate 331–glutamine 349. Residues leucine 350–alanine 370 form a helical membrane-spanning segment.

The protein belongs to the ZIP transporter (TC 2.A.5) family.

The protein localises to the cell membrane. Iron transporter that may play a role in the uptake of iron from the rhizosphere across the plasma membrane in the root epidermal layer. The chain is Fe(2+) transport protein 2 (IRT2) from Oryza sativa subsp. japonica (Rice).